A 332-amino-acid polypeptide reads, in one-letter code: 2,3-diketo-L-gulonate reductase (332 aa).

His-44 serves as the catalytic Proton donor. NAD(+)-binding positions include 168–174, 224–225, and 304–306; these read ITMVDMS, WK, and GHE.

It belongs to the LDH2/MDH2 oxidoreductase family. DlgD subfamily. Homodimer.

The protein localises to the cytoplasm. The enzyme catalyses 3-dehydro-L-gulonate + NAD(+) = 2,3-dioxo-L-gulonate + NADH + H(+). The catalysed reaction is 3-dehydro-L-gulonate + NADP(+) = 2,3-dioxo-L-gulonate + NADPH + H(+). Its function is as follows. Catalyzes the reduction of 2,3-diketo-L-gulonate in the presence of NADH, to form 3-keto-L-gulonate. This Salmonella typhi protein is 2,3-diketo-L-gulonate reductase.